A 225-amino-acid polypeptide reads, in one-letter code: 7-cyano-7-deazaguanine synthase (225 aa).

Residue 9 to 19 coordinates ATP; sequence YSGGLDSTTCL. Cys-188, Cys-198, Cys-201, and Cys-204 together coordinate Zn(2+).

Belongs to the QueC family. Zn(2+) is required as a cofactor.

The catalysed reaction is 7-carboxy-7-deazaguanine + NH4(+) + ATP = 7-cyano-7-deazaguanine + ADP + phosphate + H2O + H(+). Its pathway is purine metabolism; 7-cyano-7-deazaguanine biosynthesis. Functionally, catalyzes the ATP-dependent conversion of 7-carboxy-7-deazaguanine (CDG) to 7-cyano-7-deazaguanine (preQ(0)). In Citrifermentans bemidjiense (strain ATCC BAA-1014 / DSM 16622 / JCM 12645 / Bem) (Geobacter bemidjiensis), this protein is 7-cyano-7-deazaguanine synthase.